The following is a 545-amino-acid chain: T-complex protein 1 subunit gamma (545 aa).

At Met-1 the chain carries N-acetylmethionine. Residues 1–24 are disordered; it reads MMGHRPVLVLSQNTKRESGRKVQS. Position 11 is a phosphoserine (Ser-11). Residue Lys-15 forms a Glycyl lysine isopeptide (Lys-Gly) (interchain with G-Cter in SUMO2) linkage. ADP is bound at residue Gly-42. Gly-42 contributes to the ATP binding site. Residue Asp-93 participates in Mg(2+) binding. 6 residues coordinate ADP: Gly-94, Thr-95, Thr-96, Ser-97, Thr-162, and Lys-163. ATP contacts are provided by Gly-94, Thr-95, and Thr-96. Position 170 is a phosphoserine (Ser-170). Lys-222 is subject to N6-acetyllysine. A phosphoserine mark is found at Ser-243 and Ser-244. At Tyr-247 the chain carries Phosphotyrosine. Glycyl lysine isopeptide (Lys-Gly) (interchain with G-Cter in SUMO2) cross-links involve residues Lys-248 and Lys-249. Residue Ser-252 is modified to Phosphoserine. A disulfide bridge links Cys-366 with Cys-372. Residue Lys-381 forms a Glycyl lysine isopeptide (Lys-Gly) (interchain with G-Cter in SUMO2) linkage. Gly-411 is a binding site for ADP. Gly-411 lines the ATP pocket. Phosphothreonine occurs at positions 430 and 459. The ADP site is built by Gly-482, Glu-483, Glu-497, and Lys-502. Gly-482 serves as a coordination point for ATP. An ATP-binding site is contributed by Glu-497. The disordered stretch occupies residues 526–545; the sequence is HKKKGDDQSRQGGAPDAGQE.

It belongs to the TCP-1 chaperonin family. In terms of assembly, component of the chaperonin-containing T-complex (TRiC), a hexadecamer composed of two identical back-to-back stacked rings enclosing a protein folding chamber. Each ring is made up of eight different subunits: TCP1/CCT1, CCT2, CCT3, CCT4, CCT5, CCT6A/CCT6, CCT7, CCT8. Interacts with PACRG. Interacts with DNAAF4. Interacts with DLEC1.

The protein localises to the cytoplasm. The enzyme catalyses ATP + H2O = ADP + phosphate + H(+). Its function is as follows. Component of the chaperonin-containing T-complex (TRiC), a molecular chaperone complex that assists the folding of actin, tubulin and other proteins upon ATP hydrolysis. The TRiC complex mediates the folding of WRAP53/TCAB1, thereby regulating telomere maintenance. As part of the TRiC complex may play a role in the assembly of BBSome, a complex involved in ciliogenesis regulating transports vesicles to the cilia. This is T-complex protein 1 subunit gamma (CCT3) from Homo sapiens (Human).